A 160-amino-acid chain; its full sequence is Cytochrome b6-f complex subunit 4 (160 aa).

The next 3 membrane-spanning stretches (helical) occupy residues 36–56 (LLYI…GLSV), 95–115 (LLGV…PFIE), and 127–147 (PVAM…GIGA).

This sequence belongs to the cytochrome b family. PetD subfamily. The 4 large subunits of the cytochrome b6-f complex are cytochrome b6, subunit IV (17 kDa polypeptide, petD), cytochrome f and the Rieske protein, while the 4 small subunits are petG, petL, petM and petN. The complex functions as a dimer.

The protein resides in the plastid. It localises to the chloroplast thylakoid membrane. Functionally, component of the cytochrome b6-f complex, which mediates electron transfer between photosystem II (PSII) and photosystem I (PSI), cyclic electron flow around PSI, and state transitions. The polypeptide is Cytochrome b6-f complex subunit 4 (Guillardia theta (Cryptophyte)).